Reading from the N-terminus, the 324-residue chain is Glyoxylate/hydroxypyruvate reductase B (324 aa).

Catalysis depends on residues Arg237 and Glu266. The active-site Proton donor is the His285.

Belongs to the D-isomer specific 2-hydroxyacid dehydrogenase family. GhrB subfamily. As to quaternary structure, homodimer.

The protein resides in the cytoplasm. It carries out the reaction glycolate + NADP(+) = glyoxylate + NADPH + H(+). It catalyses the reaction (R)-glycerate + NAD(+) = 3-hydroxypyruvate + NADH + H(+). The catalysed reaction is (R)-glycerate + NADP(+) = 3-hydroxypyruvate + NADPH + H(+). Functionally, catalyzes the NADPH-dependent reduction of glyoxylate and hydroxypyruvate into glycolate and glycerate, respectively. This is Glyoxylate/hydroxypyruvate reductase B from Escherichia coli (strain SMS-3-5 / SECEC).